An 817-amino-acid polypeptide reads, in one-letter code: Myosin-A (817 aa).

Serine 19 bears the Phosphoserine mark. One can recognise a Myosin motor domain in the interval methionine 97–arginine 771. Glycine 191–threonine 198 contributes to the ATP binding site. Positions proline 661–glutamate 671 are actin-binding. Residues lysine 773 to alanine 817 are tail.

Belongs to the TRAFAC class myosin-kinesin ATPase superfamily. Myosin family. Interacts with ACT1.

Its subcellular location is the cell membrane. Functionally, myosins are actin-based motor molecules with ATPase activity. Unconventional myosins serve in intracellular movements. Their highly divergent tails are presumed to bind to membranous compartments, which would be moved relative to actin filaments. This chain is Myosin-A, found in Plasmodium yoelii yoelii.